Reading from the N-terminus, the 788-residue chain is Probable potassium transporter 9 (788 aa).

Residues 1-21 (MDPEFGRGMAPRKREPWRTTL) lie on the Cytoplasmic side of the membrane. Residues 22 to 42 (LLAYQSLGVVYGDLSISPLYV) form a helical membrane-spanning segment. Residues 43-59 (YKSTFAEDITHSESNEE) lie on the Extracellular side of the membrane. The chain crosses the membrane as a helical span at residues 60 to 80 (IFGVLSFVFWTLTLIPLIKYV). The Cytoplasmic portion of the chain corresponds to 81–151 (SIVLRADDNG…EKHKTLQTAL (71 aa)). Residues 152 to 172 (LIMVMIGTCMVIGDGVLTPAI) form a helical membrane-spanning segment. Residues 173–191 (SVFSAVSGLELSLSRDQHE) lie on the Extracellular side of the membrane. Residues 192 to 212 (YAVIPITCVILVFLFALQHYG) form a helical membrane-spanning segment. Topologically, residues 213–215 (THR) are cytoplasmic. Residues 216 to 236 (VGFLFAPIVLAWLICMSMLGL) traverse the membrane as a helical segment. At 237-264 (YNIIHWNPQVYRALNPYYMLKFLRKTKK) the chain is on the extracellular side. Residues 265–285 (SGWMSLGGILLCMTGSEAMFA) traverse the membrane as a helical segment. At 286–292 (DLGHFSY) the chain is on the cytoplasmic side. A helical membrane pass occupies residues 293 to 313 (SAIQLAFTTLVYPALILGYMG). At 314-343 (QAAYLSKHHTLNSTYQIGYYISVPESVRWP) the chain is on the extracellular side. An N-linked (GlcNAc...) asparagine glycan is attached at Asn325. A helical transmembrane segment spans residues 344–364 (VLVLAILASVVGSQAIISGTF). Residues 365-391 (SIINQSQSLSCFPRVKVVHTSENIHGQ) are Cytoplasmic-facing. Residues 392 to 412 (IYIPEINWLLMVLCIAVTVGF) traverse the membrane as a helical segment. The Extracellular portion of the chain corresponds to 413-422 (RDTKHMGNAS). Asn420 carries an N-linked (GlcNAc...) asparagine glycan. The helical transmembrane segment at 423–443 (GLAVITVMLVTTCLTSLVIML) threads the bilayer. Over 444-451 (CWHRSPAL) the chain is Cytoplasmic. Residues 452-472 (ALVFFLFFGSIEVLYFSASLI) form a helical membrane-spanning segment. Topologically, residues 473–476 (KFRE) are extracellular. The helical transmembrane segment at 477 to 497 (GAWLPIMLALILMAVMFIWHH) threads the bilayer. Over 498-788 (TTIKKYEFDL…LLEVGMVYVL (291 aa)) the chain is Cytoplasmic.

Belongs to the HAK/KUP transporter (TC 2.A.72.3) family.

It localises to the membrane. Functionally, high-affinity potassium transporter. The chain is Probable potassium transporter 9 (HAK9) from Oryza sativa subsp. japonica (Rice).